We begin with the raw amino-acid sequence, 340 residues long: Methionine import ATP-binding protein MetN 2 (340 aa).

In terms of domain architecture, ABC transporter spans 2 to 241 (ITLQNVVKEY…PQEKVTQRFV (240 aa)). 38-45 (GYSGAGKS) provides a ligand contact to ATP.

It belongs to the ABC transporter superfamily. Methionine importer (TC 3.A.1.24) family. In terms of assembly, the complex is composed of two ATP-binding proteins (MetN), two transmembrane proteins (MetI) and a solute-binding protein (MetQ).

The protein resides in the cell membrane. The catalysed reaction is L-methionine(out) + ATP + H2O = L-methionine(in) + ADP + phosphate + H(+). The enzyme catalyses D-methionine(out) + ATP + H2O = D-methionine(in) + ADP + phosphate + H(+). In terms of biological role, part of the ABC transporter complex MetNIQ involved in methionine import. Responsible for energy coupling to the transport system. The protein is Methionine import ATP-binding protein MetN 2 of Listeria monocytogenes serovar 1/2a (strain ATCC BAA-679 / EGD-e).